Here is a 149-residue protein sequence, read N- to C-terminus: Large ribosomal subunit protein bL9 (149 aa).

Belongs to the bacterial ribosomal protein bL9 family. In terms of assembly, part of the 50S ribosomal subunit. In stalled/collided disomes (pairs of ribosomes where the leading ribosome is stalled and a second ribosome has collided with it), bL9 in the collided ribosome contacts bS6 and uL2, while it contacts only helices of the 16S rRNA in the stalled ribosome; the inter-ribosome bridge thus formed is different from that formed between normally translating ribosomes.

Binds to the 23S rRNA. The protein is Large ribosomal subunit protein bL9 of Bacillus subtilis (strain 168).